A 114-amino-acid chain; its full sequence is Cytochrome c2 (114 aa).

Gln1 bears the Pyrrolidone carboxylic acid mark. Heme c is bound by residues Cys13, Cys16, His17, and Met93.

It belongs to the cytochrome c family. In terms of processing, binds 1 heme c group covalently per subunit.

Functionally, cytochrome c2 is found mainly in purple, non-sulfur, photosynthetic bacteria where it functions as the electron donor to the oxidized bacteriochlorophyll in the photophosphorylation pathway. However, it may also have a role in the respiratory chain and is found in some non-photosynthetic bacteria. The polypeptide is Cytochrome c2 (cycA) (Rhodopseudomonas palustris).